Reading from the N-terminus, the 1030-residue chain is Protein phosphatase 1 regulatory subunit 12A (1030 aa).

Positions 35–38 (KVKF) match the KVKF motif motif. 6 ANK repeats span residues 39–68 (DDGA…DINY), 72–101 (DGLT…NINQ), 105–134 (EGWI…HVGA), 138–164 (EGDT…RQGV), 198–227 (SGGT…DVNI), and 231–260 (DGWT…DMEM). (3S)-3-hydroxyasparagine; by HIF1AN; partial is present on residues N67 and N100. (3S)-3-hydroxyasparagine; by HIF1AN; partial is present on N226. 2 disordered regions span residues 290–628 (LHSE…SVPT) and 643–928 (ASTT…EKDD). A compositionally biased stretch (basic and acidic residues) spans 291–300 (HSEKRDKKSP). S299 bears the Phosphoserine mark. Residues 302 to 316 (IESTANMDNNQSQKT) show a composition bias toward polar residues. A compositionally biased stretch (basic and acidic residues) spans 318–340 (KNKETLIIEPEKNASRIESLEQE). Positions 357 to 369 (SEEDEEDDSESEA) are enriched in acidic residues. Over residues 385–402 (TSSTQAAPVAVTTPTVSS) the composition is skewed to low complexity. Residues S422 and S432 each carry the phosphoserine modification. Residues 422-432 (SPKEEERKDES) show a composition bias toward basic and acidic residues. Residue T443 is modified to Phosphothreonine. At S445 the chain carries Phosphoserine; by NUAK1. Phosphotyrosine is present on Y446. A compositionally biased stretch (low complexity) spans 469 to 480 (RSASSPRLSSSL). S472 bears the Phosphoserine; by NUAK1 mark. Residue S473 is modified to Phosphoserine; by CDK1. S477 carries the phosphoserine modification. Basic and acidic residues predominate over residues 481–491 (DNKEKEKDSKG). 2 positions are modified to phosphoserine: S507 and S509. Polar residues predominate over residues 540 to 551 (NSSVNEGSTYHK). A compositionally biased stretch (low complexity) spans 564 to 610 (SSSVPSTTSTPTVTSAAGLQKSLLSSTSTTTKITTGSSSAGTQSSTS). Phosphoserine occurs at positions 601 and 618. The segment covering 614 to 625 (WAEDSTEKEKDS) has biased composition (basic and acidic residues). Residues 643–660 (ASTTTLTTTTAGTVSSTT) show a composition bias toward low complexity. A compositionally biased stretch (basic and acidic residues) spans 673–682 (VRDEESESQR). An interaction with ROCK2 region spans residues 682–864 (RKARSRQARQ…VSFWTQDSDE (183 aa)). Positions 683 to 693 (KARSRQARQSR) are enriched in basic residues. Phosphoserine; by PKA and PKG; in vitro is present on residues S692 and S695. Position 696 is a phosphothreonine; by ROCK1, ROCK2, CDC42BP, ZIPK/DAPK3 and RAF1 (T696). The segment covering 718-767 (RTREQENEEKEKEEKEKQDKEKQEEKKESETSREDEYKQKYSRTYDETYQ) has biased composition (basic and acidic residues). The span at 773-795 (STSSSTTPSSSLSTMSSSLYASS) shows a compositional bias: low complexity. Positions 796–810 (QLNRPNSLVGITSAY) are enriched in polar residues. Residue S802 is modified to Phosphoserine. Residues 814-840 (ITKENEREGEKREEEKEGEDKSQPKSI) show a composition bias toward basic and acidic residues. Residues 841-852 (RERRRPREKRRS) show a composition bias toward basic residues. Residue S852 is modified to Phosphoserine; by ROCK2. Over residues 861–875 (DSDENEQEQQSDTEE) the composition is skewed to acidic residues. Residues S862 and S871 each carry the phosphoserine modification. Positions 884–897 (TDSISRYETSSTSA) are enriched in polar residues. 2 positions are modified to phosphoserine: S903 and S908. The segment covering 903 to 913 (SLLGRSGSYSY) has biased composition (low complexity). S910 is modified (phosphoserine; by NUAK1). Residues 914-928 (LEERKPYSSRLEKDD) are compositionally biased toward basic and acidic residues. Position 995 is a phosphoserine (S995).

PP1 comprises a catalytic subunit, PPP1CA, PPP1CB or PPP1CC, and one or several targeting or regulatory subunits. PPP1R12A mediates binding to myosin. Interacts with ARHA and CIT. Binds PPP1R12B, ROCK1 and IL16. Interacts directly with PRKG1. Non-covalent dimer of 2 dimers; PRKG1-PRKG1 and PPP1R12A-PPP1R12A. Interacts with SMTNL1. Interacts with PPP1CB; the interaction is direct. Interacts (when phosphorylated at Ser-445, Ser-472 and Ser-910) with 14-3-3. Interacts with ROCK1 and ROCK2. Interacts with isoform 1 and isoform 2 of ZIPK/DAPK3. Interacts with RAF1. Interacts with HIF1AN. Interacts with NCKAP1L. Phosphorylated by CIT (Rho-associated kinase). Phosphorylated cooperatively by ROCK1 and CDC42BP on Thr-696. Phosphorylated on upon DNA damage, probably by ATM or ATR. In vitro, phosphorylation of Ser-695 by PKA and PKG appears to prevent phosphorylation of the inhibitory site Thr-696, probably mediated by PRKG1. Phosphorylation at Ser-445, Ser-472 and Ser-910 by NUAK1 promotes interaction with 14-3-3, leading to inhibit interaction with myosin light chain MLC2, preventing dephosphorylation of MLC2. May be phosphorylated at Thr-696 by DMPK; may inhibit the myosin phosphatase activity. Phosphorylated at Ser-473 by CDK1 during mitosis, creating docking sites for the POLO box domains of PLK1. Subsequently, PLK1 binds and phosphorylates PPP1R12A. As to expression, expressed in striated muscles, specifically in type 2a fibers (at protein level).

The protein localises to the cytoplasm. The protein resides in the cytoskeleton. Its subcellular location is the stress fiber. Key regulator of protein phosphatase 1C (PPP1C). Mediates binding to myosin. As part of the PPP1C complex, involved in dephosphorylation of PLK1. Capable of inhibiting HIF1AN-dependent suppression of HIF1A activity. The polypeptide is Protein phosphatase 1 regulatory subunit 12A (Homo sapiens (Human)).